Here is a 185-residue protein sequence, read N- to C-terminus: uncharacterized protein (185 aa).

It belongs to the EUO family.

This is an uncharacterized protein from Chlamydia muridarum (strain MoPn / Nigg).